A 602-amino-acid chain; its full sequence is Cholinesterase (602 aa).

The first 28 residues, 1–28, serve as a signal peptide directing secretion; it reads MQSKGTIISIQFLLRFLLLWVLIGKSHT. Residue asparagine 85 is glycosylated (N-linked (GlcNAc...) asparagine). Cysteines 93 and 120 form a disulfide. A glycan (N-linked (GlcNAc...) asparagine) is linked at asparagine 134. Residue 144–145 participates in substrate binding; the sequence is GG. Residue serine 226 is the Acyl-ester intermediate of the active site. The residue at position 226 (serine 226) is a Phosphoserine. Residues asparagine 269 and asparagine 284 are each glycosylated (N-linked (GlcNAc...) asparagine). The cysteines at positions 280 and 291 are disulfide-linked. Glutamate 353 functions as the Charge relay system in the catalytic mechanism. N-linked (GlcNAc...) asparagine glycosylation is present at asparagine 369. Cysteine 428 and cysteine 547 are oxidised to a cystine. Histidine 466 serves as the catalytic Charge relay system. Residues asparagine 483, asparagine 509, asparagine 513, and asparagine 514 are each glycosylated (N-linked (GlcNAc...) asparagine).

This sequence belongs to the type-B carboxylesterase/lipase family. As to quaternary structure, homotetramer; disulfide-linked. Dimer of dimers.

It is found in the secreted. It catalyses the reaction an acylcholine + H2O = a carboxylate + choline + H(+). Its function is as follows. Esterase with broad substrate specificity. Contributes to the inactivation of the neurotransmitter acetylcholine. Can degrade neurotoxic organophosphate esters. This Felis catus (Cat) protein is Cholinesterase (BCHE).